We begin with the raw amino-acid sequence, 283 residues long: Bifunctional protein FolD 1 (283 aa).

NADP(+) contacts are provided by residues 166 to 168 and I232; that span reads GRS.

Belongs to the tetrahydrofolate dehydrogenase/cyclohydrolase family. As to quaternary structure, homodimer.

It carries out the reaction (6R)-5,10-methylene-5,6,7,8-tetrahydrofolate + NADP(+) = (6R)-5,10-methenyltetrahydrofolate + NADPH. The enzyme catalyses (6R)-5,10-methenyltetrahydrofolate + H2O = (6R)-10-formyltetrahydrofolate + H(+). It functions in the pathway one-carbon metabolism; tetrahydrofolate interconversion. In terms of biological role, catalyzes the oxidation of 5,10-methylenetetrahydrofolate to 5,10-methenyltetrahydrofolate and then the hydrolysis of 5,10-methenyltetrahydrofolate to 10-formyltetrahydrofolate. The protein is Bifunctional protein FolD 1 of Lactobacillus johnsonii (strain CNCM I-12250 / La1 / NCC 533).